The sequence spans 404 residues: Cysteine desulfurase IscS (404 aa).

Residues 75–76 (AT), Asn155, Gln183, and 203–205 (SAH) contribute to the pyridoxal 5'-phosphate site. Lys206 is subject to N6-(pyridoxal phosphate)lysine. Thr243 is a pyridoxal 5'-phosphate binding site. Catalysis depends on Cys328, which acts as the Cysteine persulfide intermediate. Cys328 is a binding site for [2Fe-2S] cluster.

The protein belongs to the class-V pyridoxal-phosphate-dependent aminotransferase family. NifS/IscS subfamily. In terms of assembly, homodimer. Forms a heterotetramer with IscU, interacts with other sulfur acceptors. Pyridoxal 5'-phosphate is required as a cofactor.

It localises to the cytoplasm. The catalysed reaction is (sulfur carrier)-H + L-cysteine = (sulfur carrier)-SH + L-alanine. It participates in cofactor biosynthesis; iron-sulfur cluster biosynthesis. Master enzyme that delivers sulfur to a number of partners involved in Fe-S cluster assembly, tRNA modification or cofactor biosynthesis. Catalyzes the removal of elemental sulfur atoms from cysteine to produce alanine. Functions as a sulfur delivery protein for Fe-S cluster synthesis onto IscU, an Fe-S scaffold assembly protein, as well as other S acceptor proteins. The chain is Cysteine desulfurase IscS from Vibrio vulnificus (strain YJ016).